A 239-amino-acid chain; its full sequence is Ribosomal RNA large subunit methyltransferase E (239 aa).

Residues G81, W83, D104, D120, and D144 each coordinate S-adenosyl-L-methionine. Residue K184 is the Proton acceptor of the active site.

This sequence belongs to the class I-like SAM-binding methyltransferase superfamily. RNA methyltransferase RlmE family.

The protein resides in the cytoplasm. It catalyses the reaction uridine(2552) in 23S rRNA + S-adenosyl-L-methionine = 2'-O-methyluridine(2552) in 23S rRNA + S-adenosyl-L-homocysteine + H(+). Specifically methylates the uridine in position 2552 of 23S rRNA at the 2'-O position of the ribose in the fully assembled 50S ribosomal subunit. This chain is Ribosomal RNA large subunit methyltransferase E, found in Rhizobium rhizogenes (strain K84 / ATCC BAA-868) (Agrobacterium radiobacter).